Consider the following 108-residue polypeptide: Thiosulfate sulfurtransferase GlpE (108 aa).

The Rhodanese domain maps to 17–105 (QEKEAVLVDI…WQRQFPAEVA (89 aa)). The Cysteine persulfide intermediate role is filled by Cys65.

The protein belongs to the GlpE family.

It localises to the cytoplasm. The enzyme catalyses thiosulfate + hydrogen cyanide = thiocyanate + sulfite + 2 H(+). It catalyses the reaction thiosulfate + [thioredoxin]-dithiol = [thioredoxin]-disulfide + hydrogen sulfide + sulfite + 2 H(+). Its function is as follows. Transferase that catalyzes the transfer of sulfur from thiosulfate to thiophilic acceptors such as cyanide or dithiols. May function in a CysM-independent thiosulfate assimilation pathway by catalyzing the conversion of thiosulfate to sulfite, which can then be used for L-cysteine biosynthesis. The sequence is that of Thiosulfate sulfurtransferase GlpE from Escherichia coli O127:H6 (strain E2348/69 / EPEC).